Here is a 469-residue protein sequence, read N- to C-terminus: ATP synthase subunit beta (469 aa).

Residue 156–163 coordinates ATP; that stretch reads GGAGVGKT.

It belongs to the ATPase alpha/beta chains family. As to quaternary structure, F-type ATPases have 2 components, CF(1) - the catalytic core - and CF(0) - the membrane proton channel. CF(1) has five subunits: alpha(3), beta(3), gamma(1), delta(1), epsilon(1). CF(0) has three main subunits: a(1), b(2) and c(9-12). The alpha and beta chains form an alternating ring which encloses part of the gamma chain. CF(1) is attached to CF(0) by a central stalk formed by the gamma and epsilon chains, while a peripheral stalk is formed by the delta and b chains.

The protein localises to the cell membrane. It carries out the reaction ATP + H2O + 4 H(+)(in) = ADP + phosphate + 5 H(+)(out). In terms of biological role, produces ATP from ADP in the presence of a proton gradient across the membrane. The catalytic sites are hosted primarily by the beta subunits. The protein is ATP synthase subunit beta of Bacillus mycoides (strain KBAB4) (Bacillus weihenstephanensis).